A 351-amino-acid polypeptide reads, in one-letter code: N-acetyl-gamma-glutamyl-phosphate reductase (351 aa).

C154 is a catalytic residue.

Belongs to the NAGSA dehydrogenase family. Type 1 subfamily.

It is found in the cytoplasm. It carries out the reaction N-acetyl-L-glutamate 5-semialdehyde + phosphate + NADP(+) = N-acetyl-L-glutamyl 5-phosphate + NADPH + H(+). The protein operates within amino-acid biosynthesis; L-arginine biosynthesis; N(2)-acetyl-L-ornithine from L-glutamate: step 3/4. In terms of biological role, catalyzes the NADPH-dependent reduction of N-acetyl-5-glutamyl phosphate to yield N-acetyl-L-glutamate 5-semialdehyde. This Prochlorococcus marinus (strain AS9601) protein is N-acetyl-gamma-glutamyl-phosphate reductase.